Consider the following 364-residue polypeptide: Chorismate synthase (364 aa).

Arg47 contributes to the NADP(+) binding site. FMN contacts are provided by residues Arg124–Ser126, Gly287, Lys302–Thr306, and Arg328.

Belongs to the chorismate synthase family. Homotetramer. FMNH2 is required as a cofactor.

The catalysed reaction is 5-O-(1-carboxyvinyl)-3-phosphoshikimate = chorismate + phosphate. It functions in the pathway metabolic intermediate biosynthesis; chorismate biosynthesis; chorismate from D-erythrose 4-phosphate and phosphoenolpyruvate: step 7/7. In terms of biological role, catalyzes the anti-1,4-elimination of the C-3 phosphate and the C-6 proR hydrogen from 5-enolpyruvylshikimate-3-phosphate (EPSP) to yield chorismate, which is the branch point compound that serves as the starting substrate for the three terminal pathways of aromatic amino acid biosynthesis. This reaction introduces a second double bond into the aromatic ring system. The polypeptide is Chorismate synthase (Prochlorococcus marinus (strain MIT 9515)).